A 181-amino-acid polypeptide reads, in one-letter code: Adenine phosphoribosyltransferase (181 aa).

This sequence belongs to the purine/pyrimidine phosphoribosyltransferase family. As to quaternary structure, homodimer.

It localises to the cytoplasm. It carries out the reaction AMP + diphosphate = 5-phospho-alpha-D-ribose 1-diphosphate + adenine. Its pathway is purine metabolism; AMP biosynthesis via salvage pathway; AMP from adenine: step 1/1. Its function is as follows. Catalyzes a salvage reaction resulting in the formation of AMP, that is energically less costly than de novo synthesis. The sequence is that of Adenine phosphoribosyltransferase from Vibrio cholerae serotype O1 (strain ATCC 39541 / Classical Ogawa 395 / O395).